Consider the following 429-residue polypeptide: Glutamyl-tRNA reductase (429 aa).

Substrate is bound by residues 49 to 52, S108, 113 to 115, and Q119; these read TCNR and EAQ. Residue C50 is the Nucleophile of the active site. NADP(+) is bound at residue 188–193; that stretch reads GAGEMS.

It belongs to the glutamyl-tRNA reductase family. As to quaternary structure, homodimer.

The enzyme catalyses (S)-4-amino-5-oxopentanoate + tRNA(Glu) + NADP(+) = L-glutamyl-tRNA(Glu) + NADPH + H(+). Its pathway is porphyrin-containing compound metabolism; protoporphyrin-IX biosynthesis; 5-aminolevulinate from L-glutamyl-tRNA(Glu): step 1/2. Its function is as follows. Catalyzes the NADPH-dependent reduction of glutamyl-tRNA(Glu) to glutamate 1-semialdehyde (GSA). This Rubrobacter xylanophilus (strain DSM 9941 / JCM 11954 / NBRC 16129 / PRD-1) protein is Glutamyl-tRNA reductase.